Here is a 309-residue protein sequence, read N- to C-terminus: Cytidine deaminase (309 aa).

CMP/dCMP-type deaminase domains follow at residues 48–168 and 200–309; these read DEDA…FGPR and DDND…SLSL. 89 to 91 is a binding site for substrate; that stretch reads NME. His-102 provides a ligand contact to Zn(2+). The Proton donor role is filled by Glu-104. Zn(2+) is bound by residues Cys-129 and Cys-132.

The protein belongs to the cytidine and deoxycytidylate deaminase family. In terms of assembly, homodimer. Zn(2+) is required as a cofactor.

The enzyme catalyses cytidine + H2O + H(+) = uridine + NH4(+). It carries out the reaction 2'-deoxycytidine + H2O + H(+) = 2'-deoxyuridine + NH4(+). Functionally, this enzyme scavenges exogenous and endogenous cytidine and 2'-deoxycytidine for UMP synthesis. The protein is Cytidine deaminase of Sodalis glossinidius (strain morsitans).